Reading from the N-terminus, the 85-residue chain is uncharacterized protein (85 aa).

A disordered region spans residues 1–85; that stretch reads MRWRPSSWSA…DQEQCGQHCR (85 aa). Positions 47-61 are enriched in basic and acidic residues; it reads ASVEGEGGRHADRHG.

This is an uncharacterized protein from Streptomyces lividans.